We begin with the raw amino-acid sequence, 230 residues long: Urease accessory protein UreF (230 aa).

It belongs to the UreF family. As to quaternary structure, ureD, UreF and UreG form a complex that acts as a GTP-hydrolysis-dependent molecular chaperone, activating the urease apoprotein by helping to assemble the nickel containing metallocenter of UreC. The UreE protein probably delivers the nickel.

It localises to the cytoplasm. Required for maturation of urease via the functional incorporation of the urease nickel metallocenter. This chain is Urease accessory protein UreF, found in Cupriavidus pinatubonensis (strain JMP 134 / LMG 1197) (Cupriavidus necator (strain JMP 134)).